The following is a 282-amino-acid chain: Heterogeneous nuclear ribonucleoprotein C (282 aa).

The RRM domain occupies 17–88 (SRVFIGNLNT…QVLDINLAAE (72 aa)). 2 disordered regions span residues 131 to 177 (APPP…RLKG) and 208 to 282 (QSKQ…EEDS). Residues 141–147 (PSKRQRV) carry the Nuclear localization signal motif. The segment covering 161 to 172 (SKSGQRGGSSKS) has biased composition (low complexity). A coiled-coil region spans residues 177-217 (GDDLQAIKKELSQIKQRVDSLLENLERIERDQSKQDTKLDD). Basic and acidic residues-rich tracts occupy residues 208 to 217 (QSKQDTKLDD) and 224 to 235 (LKKEETGVKLIE). Composition is skewed to acidic residues over residues 236-257 (ETGDSAEEGDLLDDDEQGEDTL) and 265-282 (KETEEGEDEGDSANEEDS).

It belongs to the RRM HNRPC family. RALY subfamily. Tetramer.

It is found in the nucleus. Its function is as follows. Binds pre-mRNA and nucleates the assembly of 40S hnRNP particles. Interacts with poly-U tracts in the 3'-UTR or 5'-UTR of mRNA and modulates the stability and the level of translation of bound mRNA molecules. Single HNRNPC tetramers bind 230-240 nucleotides. Trimers of HNRNPC tetramers bind 700 nucleotides. May play a role in the early steps of spliceosome assembly and pre-mRNA splicing. N6-methyladenosine (m6A) has been shown to alter the local structure in mRNAs and long non-coding RNAs (lncRNAs) via a mechanism named 'm(6)A-switch', facilitating binding of HNRNPC, leading to regulation of mRNA splicing. This chain is Heterogeneous nuclear ribonucleoprotein C (hnrnpc), found in Xenopus laevis (African clawed frog).